Consider the following 293-residue polypeptide: MKRSRSQNLITEMILLLRVSLHPFVVDGCKWCLTAYPKGYNFIGYLSLYLEVADNGSLPFGWRRHARYTLTLVNQNSKKSFQPNEVQEWFDDSIKWGCPSMFPLNEIHAKDSGFLVNGELKIVAEIDILEVIGDVDVSEGISTVKETIHVNGFQLLPSQAKSVSHIFERHPEIASEIHPKNSSLRTGYMSLLLSLIETLSQSPQELSKDDLCDVYIAIGCMKNAGFKLDWLENKLYEVAQKKEDDEAGETRLREMEEKLKDLKLKCSKMEALVEEEKAKVSAAKAHLSFDDVV.

The MATH domain occupies 3–126 (RSRSQNLITE…NGELKIVAEI (124 aa)). Residues 227 to 285 (KLDWLENKLYEVAQKKEDDEAGETRLREMEEKLKDLKLKCSKMEALVEEEKAKVSAAKA) are a coiled coil.

The polypeptide is MATH domain and coiled-coil domain-containing protein At3g58400 (Arabidopsis thaliana (Mouse-ear cress)).